A 409-amino-acid chain; its full sequence is MIKINEHFLKLQSSYLFSEIAKRVNAHQATHPDQSIIKLGIGDATQPLCPACLDAFHKAVDEMGTASSFRGYGPEQGYAFLREAVAANDYQARGADIQPDEVFISDGAKCDTGNFQELFATDIRVAIPDPVYPVYLDTNVMAGRTGAFENGRYGNIVYMECTAQNSFLPAIPKEPADLVYLCFPNNPTGAVATKEYLQAWVDWALDAKALILFDAAYEAFIRDPSIPKTIYEIPGARKVAVEFRSFSKTAGFTGTRCAFSVVPKECMAYDTSGKAHALHALWNRRHCTKFNGVSYPVQRAAEAVYSPEGKAQAKEMIRTYMANADRITAAMAGMGFSYVGGDHSPYIWVDTKTDSWAFFDTLLTKAGVVCTPGGGFGKCGAQYIRLSAFNSYANVDAAMKRMAEVFGKA.

Residues Tyr-15 and Gly-42 each coordinate substrate. Residues Tyr-72, 108–109 (AK), Tyr-132, Asn-186, Tyr-217, and 245–247 (SFS) contribute to the pyridoxal 5'-phosphate site. Substrate is bound by residues Lys-109, Tyr-132, and Asn-186. An N6-(pyridoxal phosphate)lysine modification is found at Lys-248. Positions 256 and 291 each coordinate pyridoxal 5'-phosphate. Substrate is bound by residues Asn-291 and Arg-385.

This sequence belongs to the class-I pyridoxal-phosphate-dependent aminotransferase family. LL-diaminopimelate aminotransferase subfamily. Homodimer. The cofactor is pyridoxal 5'-phosphate.

The catalysed reaction is (2S,6S)-2,6-diaminopimelate + 2-oxoglutarate = (S)-2,3,4,5-tetrahydrodipicolinate + L-glutamate + H2O + H(+). The protein operates within amino-acid biosynthesis; L-lysine biosynthesis via DAP pathway; LL-2,6-diaminopimelate from (S)-tetrahydrodipicolinate (aminotransferase route): step 1/1. Functionally, involved in the synthesis of meso-diaminopimelate (m-DAP or DL-DAP), required for both lysine and peptidoglycan biosynthesis. Catalyzes the direct conversion of tetrahydrodipicolinate to LL-diaminopimelate. The chain is LL-diaminopimelate aminotransferase from Desulfosudis oleivorans (strain DSM 6200 / JCM 39069 / Hxd3) (Desulfococcus oleovorans).